A 237-amino-acid polypeptide reads, in one-letter code: Eukaryotic translation initiation factor 3 subunit J (237 aa).

Residues 20–64 (ANNINKWEGEDDDEDVKESWEDEEEKKDEEKPTKTEAPAKTKPNK) form a disordered region. Residues 28–46 (GEDDDEDVKESWEDEEEKK) are compositionally biased toward acidic residues. Residues 47–58 (DEEKPTKTEAPA) show a composition bias toward basic and acidic residues. Residues 63 to 115 (NKVLKAKLLEQECLEKEEEAKRLANMSTEEKLAEKLRLQKIQEESDLKSALET) are a coiled coil.

This sequence belongs to the eIF-3 subunit J family. Component of the eukaryotic translation initiation factor 3 (eIF-3) complex. The eIF-3 complex interacts with pix.

It localises to the cytoplasm. Its function is as follows. Component of the eukaryotic translation initiation factor 3 (eIF-3) complex, which is involved in protein synthesis of a specialized repertoire of mRNAs and, together with other initiation factors, stimulates binding of mRNA and methionyl-tRNAi to the 40S ribosome. The eIF-3 complex specifically targets and initiates translation of a subset of mRNAs involved in cell proliferation. The sequence is that of Eukaryotic translation initiation factor 3 subunit J from Drosophila grimshawi (Hawaiian fruit fly).